Reading from the N-terminus, the 147-residue chain is MALKAQNTISGKEGRLFLDGEEMAHIKTFEANVEKNKSEVNIMGRRMTGHKTTGANGTGTATFYKVTSQFVLIMMDYVKKGSDPYFTLQAVLDDASSGRGTERVTLYDVNFDSAKIAGLDVDSEALEEEVPFTFEDFDVPEQLKSTF.

This sequence to B.subtilis XkdM.

This is an uncharacterized protein from Bacillus subtilis (strain 168).